The chain runs to 223 residues: Ras-related protein Rab-32 (223 aa).

N-acetylalanine is present on Ala-2. GTP is bound by residues Val-34, Gly-35, Lys-36, Thr-37, Ser-38, Ser-49, Gln-50, Tyr-52, and Thr-55. Thr-37 serves as a coordination point for Mg(2+). Positions 46–60 (QLFSQHYRATIGVDF) match the Switch 1 motif. Thr-55 is a Mg(2+) binding site. Residue Ser-69 is modified to Phosphoserine. Asp-79 provides a ligand contact to Mg(2+). GTP is bound by residues Gly-82, Asn-141, Lys-142, Asp-144, Ala-173, and Lys-174. Positions 82 to 95 (GQERFGNMTRVYYK) match the Switch 2 motif. Positions 176 to 195 (NINIDEATRFLVENMLANQQ) are PKA-RII subunit binding domain. 2 S-geranylgeranyl cysteine lipidation sites follow: Cys-222 and Cys-223.

This sequence belongs to the small GTPase superfamily. Rab family. Interacts with ANKRD27. A decreased interaction with ANKRD27 seen in the presence of SGSM2. Interacts with LRRK2 (via N-terminus); this interaction results in stimulation of RAB10 phosphorylation by LRRK2. It depends on Mg(2+) as a cofactor. Widely expressed with highest levels in liver. Strong expression also found in melanocyte, platelet, mast cell and fibroblast cell lines.

The protein localises to the mitochondrion. The protein resides in the mitochondrion outer membrane. It is found in the cytoplasmic vesicle. It localises to the phagosome. Its subcellular location is the phagosome membrane. The protein localises to the melanosome. The protein resides in the melanosome membrane. It carries out the reaction GTP + H2O = GDP + phosphate + H(+). Regulated by guanine the nucleotide exchange factor (GEF) BLOC-3 complex composed of HPS1 and HPS4 which promote the exchange of bound GDP for free GTP. Regulated by the GTPase activating protein (GAP) SGSM2/RUTBC1 which increases the GTP hydrolysis activity. Inhibited by GDP dissociation inhibitors (GDIs) which prevent Rab-GDP dissociation. In terms of biological role, the small GTPases Rab are key regulators of intracellular membrane trafficking, from the formation of transport vesicles to their fusion with membranes. Rabs cycle between an inactive GDP-bound form and an active GTP-bound form that is able to recruit to membranes different set of downstream effectors directly responsible for vesicle formation, movement, tethering and fusion. Also acts as an A-kinase anchoring protein by binding to the type II regulatory subunit of protein kinase A and anchoring it to the mitochondrion. Also involved in synchronization of mitochondrial fission. Plays a role in the maturation of phagosomes that engulf pathogens, such as S.aureus and M.tuberculosis. Plays an important role in the control of melanin production and melanosome biogenesis. In concert with RAB38, regulates the proper trafficking of melanogenic enzymes TYR, TYRP1 and DCT/TYRP2 to melanosomes in melanocytes. Stimulates phosphorylation of RAB10 'Thr-73' by LRRK2. The polypeptide is Ras-related protein Rab-32 (Mus musculus (Mouse)).